A 415-amino-acid polypeptide reads, in one-letter code: Cysteate synthase (415 aa).

Lysine 104 is modified (N6-(pyridoxal phosphate)lysine). Residues asparagine 131 and threonine 376 each contribute to the pyridoxal 5'-phosphate site.

Belongs to the threonine synthase family. Cysteate synthase subfamily. As to quaternary structure, homotrimer. The cofactor is pyridoxal 5'-phosphate.

The enzyme catalyses O-phospho-L-serine + sulfite + H(+) = L-cysteate + phosphate. Its pathway is cofactor biosynthesis; coenzyme M biosynthesis. Its function is as follows. Specifically catalyzes the beta-elimination of phosphate from L-phosphoserine and the beta-addition of sulfite to the dehydroalanine intermediate to produce L-cysteate. In Methanothrix thermoacetophila (strain DSM 6194 / JCM 14653 / NBRC 101360 / PT) (Methanosaeta thermophila), this protein is Cysteate synthase.